Reading from the N-terminus, the 285-residue chain is Octanoyltransferase (285 aa).

The region spanning 50–277 (LRTPDELWIV…NIAQRHAGDI (228 aa)) is the BPL/LPL catalytic domain. Substrate is bound by residues 89–96 (RGGQVTWH), 189–191 (SLG), and 202–204 (GIA). Cys220 acts as the Acyl-thioester intermediate in catalysis.

This sequence belongs to the LipB family.

The protein localises to the cytoplasm. It carries out the reaction octanoyl-[ACP] + L-lysyl-[protein] = N(6)-octanoyl-L-lysyl-[protein] + holo-[ACP] + H(+). Its pathway is protein modification; protein lipoylation via endogenous pathway; protein N(6)-(lipoyl)lysine from octanoyl-[acyl-carrier-protein]: step 1/2. Functionally, catalyzes the transfer of endogenously produced octanoic acid from octanoyl-acyl-carrier-protein onto the lipoyl domains of lipoate-dependent enzymes. Lipoyl-ACP can also act as a substrate although octanoyl-ACP is likely to be the physiological substrate. The sequence is that of Octanoyltransferase from Psychrobacter cryohalolentis (strain ATCC BAA-1226 / DSM 17306 / VKM B-2378 / K5).